Consider the following 488-residue polypeptide: WD repeat-containing protein slp1 (488 aa).

2 disordered regions span residues 1–29 and 74–93; these read MEIA…PNSP and CGSP…FIPS. Over residues 7–17 the composition is skewed to low complexity; sequence SSTISPTFSTP. 7 WD repeats span residues 178–215, 219–258, 261–298, 302–341, 344–386, 388–429, and 434–473; these read IDDY…VSAL, DEST…KLRT, GHQA…HQIG, GHSS…PKFT, NHNA…RVNT, DAGS…LTKQ, and AHDT…HVKR.

The protein belongs to the WD repeat CDC20/Fizzy family. Interacts with cdc13, mad3 and mes1.

In terms of biological role, required for mad2-dependent spindle checkpoint activation. Promotes ubiquitin-dependent degradation of cdc13 by the anaphase promoting complex/cyclosome (APC/C). The chain is WD repeat-containing protein slp1 (slp1) from Schizosaccharomyces pombe (strain 972 / ATCC 24843) (Fission yeast).